The following is a 339-amino-acid chain: UPF0324 membrane protein M6_Spy0799 (339 aa).

The next 9 helical transmembrane spans lie at 7-24, 28-50, 57-79, 84-106, 118-140, 150-172, 256-275, 290-307, and 314-336; these read KLPG…AWYL, FPII…FYEH, GISF…GLNL, AVGM…VAYG, ATLV…APVI, AISV…GQLL, FILF…SLGV, FIVM…LVKL, and AILL…QLSL.

The protein belongs to the UPF0324 family.

It localises to the cell membrane. This is UPF0324 membrane protein M6_Spy0799 from Streptococcus pyogenes serotype M6 (strain ATCC BAA-946 / MGAS10394).